Consider the following 263-residue polypeptide: Expansin-like A3 (263 aa).

Positions 1–20 (MRSFLYLIVVIFLFSSSVNA) are cleaved as a signal peptide. Residues 41-147 (SGACAYGPMA…QRVPCNYGKR (107 aa)) enclose the Expansin-like EG45 domain. 2 N-linked (GlcNAc...) asparagine glycosylation sites follow: N99 and N102. In terms of domain architecture, Expansin-like CBD spans 161-243 (NYLAIKLLYQ…NWNSGRIYDA (83 aa)).

It belongs to the expansin family. Expansin-like A subfamily.

It is found in the secreted. This Arabidopsis thaliana (Mouse-ear cress) protein is Expansin-like A3 (EXLA3).